The following is a 118-amino-acid chain: UPF0102 protein Swit_0572 (118 aa).

It belongs to the UPF0102 family.

The protein is UPF0102 protein Swit_0572 of Rhizorhabdus wittichii (strain DSM 6014 / CCUG 31198 / JCM 15750 / NBRC 105917 / EY 4224 / RW1) (Sphingomonas wittichii).